The primary structure comprises 132 residues: Small ribosomal subunit protein uS8c (132 aa).

This sequence belongs to the universal ribosomal protein uS8 family. In terms of assembly, part of the 30S ribosomal subunit.

The protein localises to the plastid. It is found in the chloroplast. Its function is as follows. One of the primary rRNA binding proteins, it binds directly to 16S rRNA central domain where it helps coordinate assembly of the platform of the 30S subunit. The protein is Small ribosomal subunit protein uS8c (rps8) of Amborella trichopoda.